A 593-amino-acid chain; its full sequence is Lipolysis-stimulated lipoprotein receptor (593 aa).

An N-terminal signal peptide occupies residues 1–35; the sequence is MAPAAGACAGAPDSHPATVVFVCLFLIIFCPDPAS. Over 36–206 the chain is Extracellular; sequence AIQVTVSDPY…PGFRAGPLED (171 aa). Positions 89–181 constitute an Ig-like V-type domain; sequence PASVDNQLNA…DLDGNNEAYA (93 aa). A disulfide bridge connects residues cysteine 113 and cysteine 165. A helical membrane pass occupies residues 207–227; the sequence is WLFVVVVCLASLLLFLLLGIC. At 228–593 the chain is on the cytoplasmic side; the sequence is WCQCCPHTCC…LALSRESLVV (366 aa). At threonine 283 the chain carries Phosphothreonine. Phosphoserine occurs at positions 308, 314, 332, 375, and 379. Basic and acidic residues predominate over residues 375–387; that stretch reads SEVTSLHEDDWRS. Residues 375–578 form a disordered region; sequence SEVTSLHEDD…ETDSQASRER (204 aa). Position 396 is a phosphothreonine (threonine 396). Phosphoserine is present on residues serine 407, serine 410, and serine 436. Over residues 435–444 the composition is skewed to basic and acidic residues; that stretch reads RSVDALDDIN. The segment covering 445-460 has biased composition (low complexity); it reads RPGSTESGRSSPPSSG. A phosphoserine mark is found at serine 471 and serine 473. Residues 472–550 show a composition bias toward basic and acidic residues; that stretch reads RSRDDLYDPD…GSGERRRVYR (79 aa). Phosphotyrosine is present on tyrosine 478. Serine 575 bears the Phosphoserine mark. Lysine 582 is covalently cross-linked (Glycyl lysine isopeptide (Lys-Gly) (interchain with G-Cter in ubiquitin)). A phosphoserine mark is found at serine 587 and serine 590.

It belongs to the immunoglobulin superfamily. LISCH7 family. Homotrimer or homotetramer constituted of isoform 1 and/or isoform 2 and isoform 3. Assembles into cell-cell contacts. Interacts (via the cytoplasmic domain) with MARVELD2 (via C-terminal cytoplasmic domain); the interaction is required to recruit MARVELD2 to tricellular contacts. Interacts with OCLN. Phosphorylation at Ser-308 by MAPK8/JNK1 and MAPK9/JNK2 may be required for exclusive localization at tricellular tight junstions. Post-translationally, polyubiquitinated at Lys-582 via 'Lys-63'-linked ubiquitin chains; deubiquitinated by USP53. As to expression, specifically expressed in liver. Also detected in kidney and lung.

It is found in the cell membrane. Its subcellular location is the cell junction. It localises to the tight junction. Its function is as follows. Probable role in the clearance of triglyceride-rich lipoprotein from blood. Binds chylomicrons, LDL and VLDL in presence of free fatty acids and allows their subsequent uptake in the cells. Maintains epithelial barrier function by recruiting MARVELD2/tricellulin to tricellular tight junctions. In Rattus norvegicus (Rat), this protein is Lipolysis-stimulated lipoprotein receptor.